Here is a 627-residue protein sequence, read N- to C-terminus: (-)-alpha-pinene synthase 2, chloroplastic (627 aa).

The N-terminal 36 residues, 1–36, are a transit peptide targeting the chloroplast; it reads MALVSVAPMASRSCLHKSLSSSAHELKTICRTIPTL. Residues D378, D382, and D530 each coordinate Mg(2+). The short motif at 378 to 382 is the DDXXD motif element; sequence DDMYD.

This sequence belongs to the terpene synthase family. Tpsd subfamily. Mg(2+) is required as a cofactor. Requires Mn(2+) as cofactor.

It is found in the plastid. Its subcellular location is the chloroplast. The catalysed reaction is (2E)-geranyl diphosphate = (1S,5S)-alpha-pinene + diphosphate. It carries out the reaction (2E)-geranyl diphosphate = (1S,5S)-beta-pinene + diphosphate. It functions in the pathway terpene metabolism; oleoresin biosynthesis. Functionally, involved in defensive oleoresin formation in conifers in response to insect attack or other injury. Involved in monoterpene (C10) olefins biosynthesis. A mixture of alpha- and beta-pinene (35:10) is produced by this enzyme. The chain is (-)-alpha-pinene synthase 2, chloroplastic from Picea sitchensis (Sitka spruce).